The chain runs to 177 residues: Peptide methionine sulfoxide reductase MsrA (177 aa).

The active site involves Cys15.

Belongs to the MsrA Met sulfoxide reductase family.

It catalyses the reaction L-methionyl-[protein] + [thioredoxin]-disulfide + H2O = L-methionyl-(S)-S-oxide-[protein] + [thioredoxin]-dithiol. The catalysed reaction is [thioredoxin]-disulfide + L-methionine + H2O = L-methionine (S)-S-oxide + [thioredoxin]-dithiol. Functionally, has an important function as a repair enzyme for proteins that have been inactivated by oxidation. Catalyzes the reversible oxidation-reduction of methionine sulfoxide in proteins to methionine. The protein is Peptide methionine sulfoxide reductase MsrA of Mycobacterium leprae (strain Br4923).